The following is a 207-amino-acid chain: Ribosomal RNA small subunit methyltransferase G (207 aa).

S-adenosyl-L-methionine is bound by residues glycine 73, leucine 78, 124–125 (VE), and arginine 139.

The protein belongs to the methyltransferase superfamily. RNA methyltransferase RsmG family.

The protein localises to the cytoplasm. It carries out the reaction guanosine(527) in 16S rRNA + S-adenosyl-L-methionine = N(7)-methylguanosine(527) in 16S rRNA + S-adenosyl-L-homocysteine. Specifically methylates the N7 position of guanine in position 527 of 16S rRNA. This chain is Ribosomal RNA small subunit methyltransferase G, found in Escherichia coli O1:K1 / APEC.